The primary structure comprises 202 residues: LexA repressor 2 (202 aa).

Residues 28–48 (LADIATRFGFASRSVARKHIT) constitute a DNA-binding region (H-T-H motif). Active-site for autocatalytic cleavage activity residues include serine 123 and lysine 160.

This sequence belongs to the peptidase S24 family. In terms of assembly, homodimer.

It catalyses the reaction Hydrolysis of Ala-|-Gly bond in repressor LexA.. Functionally, represses a number of genes involved in the response to DNA damage (SOS response), including recA and lexA. In the presence of single-stranded DNA, RecA interacts with LexA causing an autocatalytic cleavage which disrupts the DNA-binding part of LexA, leading to derepression of the SOS regulon and eventually DNA repair. In Pseudomonas putida (strain ATCC 47054 / DSM 6125 / CFBP 8728 / NCIMB 11950 / KT2440), this protein is LexA repressor 2.